A 152-amino-acid chain; its full sequence is Early glycoprotein GP48 (152 aa).

The signal sequence occupies residues 1-25; it reads MVMMLRTWRLLPMVLLAAYCYCVFG. N-linked (GlcNAc...) asparagine; by host glycans are attached at residues N48, N53, N61, N69, N108, N112, N122, N139, and N148.

Belongs to the RL11 family. Post-translationally, N-glycosylated and possibly O-glycosylated.

Its subcellular location is the virion membrane. The protein is Early glycoprotein GP48 (UL4) of Homo sapiens (Human).